A 185-amino-acid polypeptide reads, in one-letter code: Large ribosomal subunit protein uL5 (185 aa).

Belongs to the universal ribosomal protein uL5 family. In terms of assembly, part of the 50S ribosomal subunit; part of the 5S rRNA/L5/L18/L25 subcomplex. Contacts the 5S rRNA and the P site tRNA. Forms a bridge to the 30S subunit in the 70S ribosome.

This is one of the proteins that bind and probably mediate the attachment of the 5S RNA into the large ribosomal subunit, where it forms part of the central protuberance. In the 70S ribosome it contacts protein S13 of the 30S subunit (bridge B1b), connecting the 2 subunits; this bridge is implicated in subunit movement. Contacts the P site tRNA; the 5S rRNA and some of its associated proteins might help stabilize positioning of ribosome-bound tRNAs. The polypeptide is Large ribosomal subunit protein uL5 (Treponema pallidum (strain Nichols)).